A 463-amino-acid polypeptide reads, in one-letter code: Female germline-specific tumor suppressor gld-1 (463 aa).

Polar residues predominate over residues 1–10; it reads MPSCTTPTYG. A disordered region spans residues 1-76; that stretch reads MPSCTTPTYG…RAPPPARLTL (76 aa). Low complexity predominate over residues 11-31; it reads VSTQLESQSSESPSRSSVMTP. The segment at 135 to 205 is qua1 domain; involved in homodimerization; the sequence is PTATEPIEVE…PEPAGDMISI (71 aa). Positions 208–260 constitute a KH domain; the sequence is KIYVPKNEYPDYNFVGRILGPRGMTAKQLEQDTGCKIMVRGKGSMRDKSKESA. The segment at 305 to 336 is qua2 domain; involved in RNA binding; that stretch reads APEGTDELKRKQLMELAIINGTYRPMKSPNPA. The segment at 443-463 is disordered; sequence NTNVSPSGASPSASSVNNTSF. Residues 447 to 457 are compositionally biased toward low complexity; that stretch reads SPSGASPSASS.

As to quaternary structure, homodimer. In terms of processing, phosphorylated by cdk-2 which may negatively regulate its expression in distal mitotic germline cells. Undergoes proteasomal degradation in proximal oocytes following mating. As to expression, expressed in proximal and distal oocytes in female worms but is eliminated from proximal oocytes following mating.

Its function is as follows. RNA-binding protein which recognizes the 5'-UACUCAU-3' RNA consensus sequence. Binds sequences in both the 5'coding and the 3'-UTR region of rme-2 mRNA. Binds sequences in the 3'-UTR region of cye-1 mRNA. Binds to cyb-2.1, cyb-2.2 and cyb-3 mRNA. Binds sequences in the 3'-UTR region of tra-2 mRNA. Binds to the 3' UTR of Notch receptor homolog glp-1, thereby repressing glp-1 translation in the embryo. Binding to the glp-1 3' UTR is inhibited by pos-1 binding to an overlapping binding site in the glp-1 3' UTR. Germ line-specific tumor suppressor essential for oogenesis. Controls the spatial pattern of translation of multiple oogenesis specific mRNAs (e.g. yolk receptor rme-2) by repression of translation during early meiotic prophase (leptotene to pachytene) and then derepression of translation during diplotene/ diakinesis, following its degradation. Also functions to promote the male sexual fate in the hermaphrodite germline but not the male germline. Represses translation of the vacuolar ATPase component vha-13 in the distal gonad. Functions redundantly with gld-2 to promote the initiation of meiotic development and/or inhibit stem cell proliferation. By regulating cye-1 expression, prevents entry into mitosis in meiotic germline cells. The sequence is that of Female germline-specific tumor suppressor gld-1 (gld-1) from Caenorhabditis elegans.